A 269-amino-acid polypeptide reads, in one-letter code: 3-deoxy-manno-octulosonate cytidylyltransferase (269 aa).

It belongs to the KdsB family.

The protein localises to the cytoplasm. It catalyses the reaction 3-deoxy-alpha-D-manno-oct-2-ulosonate + CTP = CMP-3-deoxy-beta-D-manno-octulosonate + diphosphate. It participates in nucleotide-sugar biosynthesis; CMP-3-deoxy-D-manno-octulosonate biosynthesis; CMP-3-deoxy-D-manno-octulosonate from 3-deoxy-D-manno-octulosonate and CTP: step 1/1. Its pathway is bacterial outer membrane biogenesis; lipopolysaccharide biosynthesis. Functionally, activates KDO (a required 8-carbon sugar) for incorporation into bacterial lipopolysaccharide in Gram-negative bacteria. The protein is 3-deoxy-manno-octulosonate cytidylyltransferase of Cupriavidus necator (strain ATCC 17699 / DSM 428 / KCTC 22496 / NCIMB 10442 / H16 / Stanier 337) (Ralstonia eutropha).